The primary structure comprises 635 residues: 1-deoxy-D-xylulose-5-phosphate synthase (635 aa).

Thiamine diphosphate-binding positions include histidine 72 and 113–115 (GHA). Aspartate 144 contributes to the Mg(2+) binding site. Thiamine diphosphate contacts are provided by residues 145-146 (GA), asparagine 174, tyrosine 287, and glutamate 370. Asparagine 174 serves as a coordination point for Mg(2+).

The protein belongs to the transketolase family. DXPS subfamily. As to quaternary structure, homodimer. Mg(2+) serves as cofactor. Requires thiamine diphosphate as cofactor.

The catalysed reaction is D-glyceraldehyde 3-phosphate + pyruvate + H(+) = 1-deoxy-D-xylulose 5-phosphate + CO2. It functions in the pathway metabolic intermediate biosynthesis; 1-deoxy-D-xylulose 5-phosphate biosynthesis; 1-deoxy-D-xylulose 5-phosphate from D-glyceraldehyde 3-phosphate and pyruvate: step 1/1. In terms of biological role, catalyzes the acyloin condensation reaction between C atoms 2 and 3 of pyruvate and glyceraldehyde 3-phosphate to yield 1-deoxy-D-xylulose-5-phosphate (DXP). The polypeptide is 1-deoxy-D-xylulose-5-phosphate synthase (Trichormus variabilis (strain ATCC 29413 / PCC 7937) (Anabaena variabilis)).